The sequence spans 147 residues: Putative pre-16S rRNA nuclease (147 aa).

Belongs to the YqgF nuclease family.

It is found in the cytoplasm. Functionally, could be a nuclease involved in processing of the 5'-end of pre-16S rRNA. The polypeptide is Putative pre-16S rRNA nuclease (Polynucleobacter necessarius subsp. necessarius (strain STIR1)).